We begin with the raw amino-acid sequence, 375 residues long: Heat shock protein 42 (375 aa).

Disordered stretches follow at residues 21–59 (TGQRGQQGYPRQPQRPQRYHPHYGQVHVGGHHPRHHPLY), 81–127 (SPEY…YYHC), 154–238 (PYEG…ETRM), and 347–375 (PKPKKRIAIEEIPDEELEFEENPNPTVEN). Residues 22-48 (GQRGQQGYPRQPQRPQRYHPHYGQVHV) are compositionally biased toward low complexity. Residues 49–58 (GGHHPRHHPL) are compositionally biased toward basic residues. Composition is skewed to acidic residues over residues 85 to 101 (GYDDEDGEEEDQDEDMV) and 158 to 168 (TEPEIEANTEQ). Residues 169–197 (EGEKGEEKDKKDKSEAPKEEAGETNKEKP) are compositionally biased toward basic and acidic residues. A phosphoserine mark is found at S182, S213, S214, S215, and S223. A sHSP domain is found at 237–356 (RMDLPFSPEV…PKPKKRIAIE (120 aa)). Over residues 357–367 (EIPDEELEFEE) the composition is skewed to acidic residues.

It belongs to the small heat shock protein (HSP20) family. Forms oligomeric complexes. Interacts with itself.

This Saccharomyces cerevisiae (strain ATCC 204508 / S288c) (Baker's yeast) protein is Heat shock protein 42 (HSP42).